Consider the following 185-residue polypeptide: Ribosome maturation factor RimM (185 aa).

Residues 108-183 enclose the PRC barrel domain; the sequence is PGEFHVTDLL…RLEIKTIPGL (76 aa).

Belongs to the RimM family. As to quaternary structure, binds ribosomal protein uS19.

Its subcellular location is the cytoplasm. Functionally, an accessory protein needed during the final step in the assembly of 30S ribosomal subunit, possibly for assembly of the head region. Essential for efficient processing of 16S rRNA. May be needed both before and after RbfA during the maturation of 16S rRNA. It has affinity for free ribosomal 30S subunits but not for 70S ribosomes. The chain is Ribosome maturation factor RimM from Synechocystis sp. (strain ATCC 27184 / PCC 6803 / Kazusa).